The chain runs to 204 residues: Imidazole glycerol phosphate synthase subunit HisH (204 aa).

Positions 5 to 204 constitute a Glutamine amidotransferase type-1 domain; sequence KVVIIDTGCA…AKLIQNFLEL (200 aa). Cys-80 acts as the Nucleophile in catalysis. Catalysis depends on residues His-186 and Glu-188.

Heterodimer of HisH and HisF.

The protein localises to the cytoplasm. The catalysed reaction is 5-[(5-phospho-1-deoxy-D-ribulos-1-ylimino)methylamino]-1-(5-phospho-beta-D-ribosyl)imidazole-4-carboxamide + L-glutamine = D-erythro-1-(imidazol-4-yl)glycerol 3-phosphate + 5-amino-1-(5-phospho-beta-D-ribosyl)imidazole-4-carboxamide + L-glutamate + H(+). It carries out the reaction L-glutamine + H2O = L-glutamate + NH4(+). It participates in amino-acid biosynthesis; L-histidine biosynthesis; L-histidine from 5-phospho-alpha-D-ribose 1-diphosphate: step 5/9. Its function is as follows. IGPS catalyzes the conversion of PRFAR and glutamine to IGP, AICAR and glutamate. The HisH subunit catalyzes the hydrolysis of glutamine to glutamate and ammonia as part of the synthesis of IGP and AICAR. The resulting ammonia molecule is channeled to the active site of HisF. The chain is Imidazole glycerol phosphate synthase subunit HisH from Vibrio parahaemolyticus serotype O3:K6 (strain RIMD 2210633).